We begin with the raw amino-acid sequence, 328 residues long: Biotin synthase (328 aa).

The region spanning 43–272 (NVVQKASLLS…KSTVRLSAGR (230 aa)) is the Radical SAM core domain. 3 residues coordinate [4Fe-4S] cluster: Cys-58, Cys-62, and Cys-65. Positions 103, 135, 195, and 267 each coordinate [2Fe-2S] cluster.

This sequence belongs to the radical SAM superfamily. Biotin synthase family. In terms of assembly, homodimer. The cofactor is [4Fe-4S] cluster. Requires [2Fe-2S] cluster as cofactor.

It catalyses the reaction (4R,5S)-dethiobiotin + (sulfur carrier)-SH + 2 reduced [2Fe-2S]-[ferredoxin] + 2 S-adenosyl-L-methionine = (sulfur carrier)-H + biotin + 2 5'-deoxyadenosine + 2 L-methionine + 2 oxidized [2Fe-2S]-[ferredoxin]. It participates in cofactor biosynthesis; biotin biosynthesis; biotin from 7,8-diaminononanoate: step 2/2. In terms of biological role, catalyzes the conversion of dethiobiotin (DTB) to biotin by the insertion of a sulfur atom into dethiobiotin via a radical-based mechanism. The polypeptide is Biotin synthase (Allorhizobium ampelinum (strain ATCC BAA-846 / DSM 112012 / S4) (Agrobacterium vitis (strain S4))).